Reading from the N-terminus, the 280-residue chain is Phosphatidylserine decarboxylase proenzyme (280 aa).

Active-site charge relay system; for autoendoproteolytic cleavage activity residues include D86, H143, and S246. S246 serves as the catalytic Schiff-base intermediate with substrate; via pyruvic acid; for decarboxylase activity. S246 carries the pyruvic acid (Ser); by autocatalysis modification.

Belongs to the phosphatidylserine decarboxylase family. PSD-B subfamily. Prokaryotic type I sub-subfamily. In terms of assembly, heterodimer of a large membrane-associated beta subunit and a small pyruvoyl-containing alpha subunit. It depends on pyruvate as a cofactor. In terms of processing, is synthesized initially as an inactive proenzyme. Formation of the active enzyme involves a self-maturation process in which the active site pyruvoyl group is generated from an internal serine residue via an autocatalytic post-translational modification. Two non-identical subunits are generated from the proenzyme in this reaction, and the pyruvate is formed at the N-terminus of the alpha chain, which is derived from the carboxyl end of the proenzyme. The autoendoproteolytic cleavage occurs by a canonical serine protease mechanism, in which the side chain hydroxyl group of the serine supplies its oxygen atom to form the C-terminus of the beta chain, while the remainder of the serine residue undergoes an oxidative deamination to produce ammonia and the pyruvoyl prosthetic group on the alpha chain. During this reaction, the Ser that is part of the protease active site of the proenzyme becomes the pyruvoyl prosthetic group, which constitutes an essential element of the active site of the mature decarboxylase.

Its subcellular location is the cell membrane. The enzyme catalyses a 1,2-diacyl-sn-glycero-3-phospho-L-serine + H(+) = a 1,2-diacyl-sn-glycero-3-phosphoethanolamine + CO2. The protein operates within phospholipid metabolism; phosphatidylethanolamine biosynthesis; phosphatidylethanolamine from CDP-diacylglycerol: step 2/2. Its function is as follows. Catalyzes the formation of phosphatidylethanolamine (PtdEtn) from phosphatidylserine (PtdSer). This is Phosphatidylserine decarboxylase proenzyme from Brevibacillus brevis (strain 47 / JCM 6285 / NBRC 100599).